The chain runs to 115 residues: NADH-ubiquinone oxidoreductase chain 3 (115 aa).

Transmembrane regions (helical) follow at residues 4–24 (LMALLVNITLSTLLIIVAFWL), 55–75 (FFLVAITFLLFDLEIALLLPL), and 84–104 (INIMMLTAFILVSVLALGLAY).

This sequence belongs to the complex I subunit 3 family. Core subunit of respiratory chain NADH dehydrogenase (Complex I) which is composed of 45 different subunits. Interacts with TMEM186. Interacts with TMEM242.

Its subcellular location is the mitochondrion inner membrane. It catalyses the reaction a ubiquinone + NADH + 5 H(+)(in) = a ubiquinol + NAD(+) + 4 H(+)(out). In terms of biological role, core subunit of the mitochondrial membrane respiratory chain NADH dehydrogenase (Complex I) which catalyzes electron transfer from NADH through the respiratory chain, using ubiquinone as an electron acceptor. Essential for the catalytic activity of complex I. This chain is NADH-ubiquinone oxidoreductase chain 3, found in Peromyscus melanotis (Black-eared mouse).